The sequence spans 191 residues: Large ribosomal subunit protein uL5 (191 aa).

Belongs to the universal ribosomal protein uL5 family. As to quaternary structure, part of the 50S ribosomal subunit; part of the 5S rRNA/L5/L18/L25 subcomplex. Contacts the 5S rRNA and the P site tRNA. Forms a bridge to the 30S subunit in the 70S ribosome.

In terms of biological role, this is one of the proteins that bind and probably mediate the attachment of the 5S RNA into the large ribosomal subunit, where it forms part of the central protuberance. In the 70S ribosome it contacts protein S13 of the 30S subunit (bridge B1b), connecting the 2 subunits; this bridge is implicated in subunit movement. Contacts the P site tRNA; the 5S rRNA and some of its associated proteins might help stabilize positioning of ribosome-bound tRNAs. The chain is Large ribosomal subunit protein uL5 from Micrococcus luteus (Micrococcus lysodeikticus).